The chain runs to 357 residues: Ubiquitin carboxyl-terminal hydrolase 2 (357 aa).

The USP domain maps to 19–351 (TGLRNLGNTC…DAYLLFYELA (333 aa)). The Nucleophile role is filled by Cys-28. Zn(2+) contacts are provided by Cys-177, Cys-180, Cys-228, and Cys-231. His-309 serves as the catalytic Proton acceptor.

This sequence belongs to the peptidase C19 family. USP2 subfamily. Homooligomer.

It localises to the cytoplasm. Its subcellular location is the perinuclear region. It carries out the reaction Thiol-dependent hydrolysis of ester, thioester, amide, peptide and isopeptide bonds formed by the C-terminal Gly of ubiquitin (a 76-residue protein attached to proteins as an intracellular targeting signal).. In terms of biological role, hydrolase that deubiquitinates polyubiquitinated target proteins such as MDM2, MDM4 and CCND1. Possesses both ubiquitin-specific peptidase and isopeptidase activities. May play a role in the regulation of the circadian clock. In Gallus gallus (Chicken), this protein is Ubiquitin carboxyl-terminal hydrolase 2 (USP2).